The sequence spans 587 residues: MFS-type transporter opaD (587 aa).

Helical transmembrane passes span 87–107, 124–146, 153–173, 184–204, 214–234, 242–262, 284–304, 315–335, and 357–377; these read VAIM…NTIL, MGWY…GKLL, WVYI…GVSP, ISGT…TIIV, GILS…GGAF, WCFY…LLLF, IIGL…LQWG, IIAL…VEYW, and LFTF…PIWF. Residue Asn382 is glycosylated (N-linked (GlcNAc...) asparagine). Transmembrane regions (helical) follow at residues 393–413, 414–434, 447–467, 483–503, and 554–574; these read IPLI…VTTL, GYYI…AGLL, IGFQ…PLVV, LVTL…QSVF, and VYLV…PIRW.

The protein belongs to the major facilitator superfamily. TCR/Tet family.

It is found in the membrane. MFS-type transporter; part of the gene cluster that mediates the biosynthesis of oxepinamides, derivatives of anthranilyl-containing tripeptides that share an oxepin ring and a fused pyrimidinone moiety. This chain is MFS-type transporter opaD, found in Aspergillus ustus.